The primary structure comprises 437 residues: Glutamyl-tRNA reductase (437 aa).

Residues 49 to 52 (TCNR), Ser-109, 114 to 116 (EGQ), and Gln-120 contribute to the substrate site. The active-site Nucleophile is Cys-50. 198 to 203 (GAGRMS) serves as a coordination point for NADP(+).

The protein belongs to the glutamyl-tRNA reductase family. As to quaternary structure, homodimer.

The enzyme catalyses (S)-4-amino-5-oxopentanoate + tRNA(Glu) + NADP(+) = L-glutamyl-tRNA(Glu) + NADPH + H(+). Its pathway is porphyrin-containing compound metabolism; protoporphyrin-IX biosynthesis; 5-aminolevulinate from L-glutamyl-tRNA(Glu): step 1/2. The protein operates within porphyrin-containing compound metabolism; chlorophyll biosynthesis. In terms of biological role, catalyzes the NADPH-dependent reduction of glutamyl-tRNA(Glu) to glutamate 1-semialdehyde (GSA). In Prochlorococcus marinus (strain SARG / CCMP1375 / SS120), this protein is Glutamyl-tRNA reductase.